The chain runs to 104 residues: Large ribosomal subunit protein uL24 (104 aa).

The protein belongs to the universal ribosomal protein uL24 family. In terms of assembly, part of the 50S ribosomal subunit.

One of two assembly initiator proteins, it binds directly to the 5'-end of the 23S rRNA, where it nucleates assembly of the 50S subunit. Functionally, one of the proteins that surrounds the polypeptide exit tunnel on the outside of the subunit. In Aliivibrio fischeri (strain ATCC 700601 / ES114) (Vibrio fischeri), this protein is Large ribosomal subunit protein uL24.